The sequence spans 20 residues: Acidic phospholipase A2 CbIbeta (20 aa).

Belongs to the phospholipase A2 family. Group II subfamily. D49 sub-subfamily. Heterodimer of an acidic subunit (CbIalpha or CbIbeta) and a basic subunit (CbII). The acidic subunit (CbI) is non-toxic, and increases the toxicity of the basic subunit (CbII). Ca(2+) is required as a cofactor. In terms of processing, contains 7 disulfide bonds. In terms of tissue distribution, expressed by the venom gland.

Its subcellular location is the secreted. It carries out the reaction a 1,2-diacyl-sn-glycero-3-phosphocholine + H2O = a 1-acyl-sn-glycero-3-phosphocholine + a fatty acid + H(+). In terms of biological role, heterodimer: presynaptic neurotoxin. Monomer: Snake venom phospholipase A2 (PLA2) is inactive towards micellar phosphatidylcholine but is weakly active towards non-micellar dithiolecithin. PLA2 catalyzes the calcium-dependent hydrolysis of the 2-acyl groups in 3-sn-phosphoglycerides. This chain is Acidic phospholipase A2 CbIbeta, found in Pseudocerastes fieldi (Field's horned viper).